Reading from the N-terminus, the 144-residue chain is Large ribosomal subunit protein uL15 (144 aa).

Positions Met-1–Gly-52 are disordered. Residues Arg-21–Ala-31 are compositionally biased toward gly residues.

Belongs to the universal ribosomal protein uL15 family. Part of the 50S ribosomal subunit.

Binds to the 23S rRNA. This Yersinia pseudotuberculosis serotype O:1b (strain IP 31758) protein is Large ribosomal subunit protein uL15.